A 44-amino-acid polypeptide reads, in one-letter code: Endochitinase 1 (44 aa).

The protein belongs to the glycosyl hydrolase 19 family. Chitinase class I subfamily.

The catalysed reaction is Random endo-hydrolysis of N-acetyl-beta-D-glucosaminide (1-&gt;4)-beta-linkages in chitin and chitodextrins.. In terms of biological role, defense against chitin-containing fungal pathogens. In Capsicum chinense (Scotch bonnet), this protein is Endochitinase 1.